The chain runs to 262 residues: Hydroxyethylthiazole kinase (262 aa).

Substrate is bound at residue Met-50. 2 residues coordinate ATP: Arg-125 and Thr-171. Position 198 (Gly-198) interacts with substrate.

This sequence belongs to the Thz kinase family. Mg(2+) is required as a cofactor.

It carries out the reaction 5-(2-hydroxyethyl)-4-methylthiazole + ATP = 4-methyl-5-(2-phosphooxyethyl)-thiazole + ADP + H(+). Its pathway is cofactor biosynthesis; thiamine diphosphate biosynthesis; 4-methyl-5-(2-phosphoethyl)-thiazole from 5-(2-hydroxyethyl)-4-methylthiazole: step 1/1. Functionally, catalyzes the phosphorylation of the hydroxyl group of 4-methyl-5-beta-hydroxyethylthiazole (THZ). The protein is Hydroxyethylthiazole kinase of Escherichia coli O139:H28 (strain E24377A / ETEC).